A 683-amino-acid chain; its full sequence is DNA ligase (683 aa).

Residues 35 to 39 (DTEYD), 84 to 85 (SL), and Glu116 each bind NAD(+). The active-site N6-AMP-lysine intermediate is Lys118. NAD(+) contacts are provided by Arg139, Glu176, Lys293, and Lys317. The Zn(2+) site is built by Cys419, Cys422, Cys437, and Cys443. In terms of domain architecture, BRCT spans 602 to 683 (AGPQLLAGKT…LMKLLAKGVE (82 aa)).

This sequence belongs to the NAD-dependent DNA ligase family. LigA subfamily. Requires Mg(2+) as cofactor. Mn(2+) is required as a cofactor.

The catalysed reaction is NAD(+) + (deoxyribonucleotide)n-3'-hydroxyl + 5'-phospho-(deoxyribonucleotide)m = (deoxyribonucleotide)n+m + AMP + beta-nicotinamide D-nucleotide.. In terms of biological role, DNA ligase that catalyzes the formation of phosphodiester linkages between 5'-phosphoryl and 3'-hydroxyl groups in double-stranded DNA using NAD as a coenzyme and as the energy source for the reaction. It is essential for DNA replication and repair of damaged DNA. The polypeptide is DNA ligase (Dechloromonas aromatica (strain RCB)).